The primary structure comprises 243 residues: CTD nuclear envelope phosphatase 1 homolog (243 aa).

Residues 11–27 (ALLLLLSKVWTCICFMF) traverse the membrane as a helical segment. In terms of domain architecture, FCP1 homology spans 56 to 223 (SLVQRKTLVL…LSLLPMLDAL (168 aa)).

It belongs to the dullard family.

It localises to the membrane. The catalysed reaction is O-phospho-L-seryl-[protein] + H2O = L-seryl-[protein] + phosphate. It carries out the reaction O-phospho-L-threonyl-[protein] + H2O = L-threonyl-[protein] + phosphate. In terms of biological role, serine/threonine protein phosphatase that may dephosphorylate and activate lipin-like phosphatases. Lipins are phosphatidate phosphatases that catalyze the conversion of phosphatidic acid to diacylglycerol and control the metabolism of fatty acids at different levels. May indirectly modulate the lipid composition of nuclear and/or endoplasmic reticulum membranes and be required for proper nuclear membrane morphology and/or dynamics. May also indirectly regulate the production of lipid droplets and triacylglycerol. This chain is CTD nuclear envelope phosphatase 1 homolog (l(1)G0269), found in Drosophila pseudoobscura pseudoobscura (Fruit fly).